The sequence spans 98 residues: NADH-ubiquinone oxidoreductase chain 4L (98 aa).

The next 3 membrane-spanning stretches (helical) occupy residues 1–21, 27–47, and 61–81; these read MTPTYMNIMLAFTISLLGMLT, VASLLCLEGMMMSLFIMATLI, and IILLVFAACETAVGLALLISI.

This sequence belongs to the complex I subunit 4L family. Core subunit of respiratory chain NADH dehydrogenase (Complex I) which is composed of 45 different subunits.

The protein resides in the mitochondrion inner membrane. It carries out the reaction a ubiquinone + NADH + 5 H(+)(in) = a ubiquinol + NAD(+) + 4 H(+)(out). Functionally, core subunit of the mitochondrial membrane respiratory chain NADH dehydrogenase (Complex I) which catalyzes electron transfer from NADH through the respiratory chain, using ubiquinone as an electron acceptor. Part of the enzyme membrane arm which is embedded in the lipid bilayer and involved in proton translocation. This is NADH-ubiquinone oxidoreductase chain 4L (MT-ND4L) from Macaca fascicularis (Crab-eating macaque).